We begin with the raw amino-acid sequence, 642 residues long: Mini-chromosome maintenance complex-binding protein (642 aa).

Over residues 151 to 161 the composition is skewed to polar residues; it reads ARVSPSTSYTP. Residues 151–197 are disordered; the sequence is ARVSPSTSYTPSRHKRSYEDDDDMDLQPNKQKDQHAGARQAGSVGGL. Residue Ser154 is modified to Phosphoserine. Thr160 is subject to Phosphothreonine. Ser167 and Ser298 each carry phosphoserine.

This sequence belongs to the MCMBP family. As to quaternary structure, interacts with the MCM complex: associates with the MCM3-7 complex which lacks MCM2, while it does not interact with the MCM complex when MCM2 is present (MCM2-7 complex). Interacts with the RPA complex, when composed of all RPA1, RPA2 and RPA3 components, but not with RPA1 or RPA2 alone.

Its subcellular location is the nucleus. Its function is as follows. Associated component of the MCM complex that acts as a regulator of DNA replication. Binds to the MCM complex during late S phase and promotes the disassembly of the MCM complex from chromatin, thereby acting as a key regulator of pre-replication complex (pre-RC) unloading from replicated DNA. Can dissociate the MCM complex without addition of ATP; probably acts by destabilizing interactions of each individual subunits of the MCM complex. Required for sister chromatid cohesion. The polypeptide is Mini-chromosome maintenance complex-binding protein (MCMBP) (Homo sapiens (Human)).